The following is a 173-amino-acid chain: Bifunctional protein PyrR (173 aa).

Positions 93 to 105 match the PRPP-binding motif; that stretch reads VILVDDVLYTGRT.

It belongs to the purine/pyrimidine phosphoribosyltransferase family. PyrR subfamily. As to quaternary structure, homodimer and homohexamer; in equilibrium.

The enzyme catalyses UMP + diphosphate = 5-phospho-alpha-D-ribose 1-diphosphate + uracil. Functionally, regulates transcriptional attenuation of the pyrimidine nucleotide (pyr) operon by binding in a uridine-dependent manner to specific sites on pyr mRNA. This disrupts an antiterminator hairpin in the RNA and favors formation of a downstream transcription terminator, leading to a reduced expression of downstream genes. Its function is as follows. Also displays a weak uracil phosphoribosyltransferase activity which is not physiologically significant. The protein is Bifunctional protein PyrR of Streptococcus uberis (strain ATCC BAA-854 / 0140J).